Consider the following 290-residue polypeptide: Endo-1,4-beta-xylanase B (290 aa).

Positions 1–19 are cleaved as a signal peptide; that stretch reads MVSFNSLLVAVSAATCALA. N-linked (GlcNAc...) asparagine glycosylation is present at Asn26. The GH11 domain occupies 34–222; it reads QSTPAGTGTN…SSGSSTVTVN (189 aa). The Nucleophile role is filled by Glu118. Residue Glu209 is the Proton donor of the active site. The tract at residues 223–248 is disordered; that stretch reads PAGGVTSPIAPTGPSSVSTTPSGPSS. The span at 234-248 shows a compositional bias: low complexity; sequence TGPSSVSTTPSGPSS. Residues 255-290 enclose the CBM1 domain; that stretch reads TCSALYGQCGGQGWTGPTCCSSGTCKFSNNWYSQCL.

This sequence belongs to the glycosyl hydrolase 11 (cellulase G) family.

It is found in the secreted. It catalyses the reaction Endohydrolysis of (1-&gt;4)-beta-D-xylosidic linkages in xylans.. Its pathway is glycan degradation; xylan degradation. Its function is as follows. Endo-1,4-beta-xylanase involved in the hydrolysis of xylan, a major structural heterogeneous polysaccharide found in plant biomass representing the second most abundant polysaccharide in the biosphere, after cellulose. The polypeptide is Endo-1,4-beta-xylanase B (xynB) (Phanerodontia chrysosporium (White-rot fungus)).